A 110-amino-acid polypeptide reads, in one-letter code: Protein OPG154 (110 aa).

This sequence belongs to the orthopoxvirus OPG154 protein family. In terms of assembly, homohexamers, covalently linked. Interacts with OPG144 and OPG153.

It localises to the virion. Its function is as follows. Structural protein involved in the envelopment of mature virion (MV) to form the wrapped virion (WV). The wrapping consists of the addition of Golgi membranes to the mature virion. Participates in mature virion (MV) movement within the infected cell. May play an indirect role in MV-cell fusion. The protein is Protein OPG154 (OPG154) of Homo sapiens (Human).